We begin with the raw amino-acid sequence, 707 residues long: DNA-binding protein RFX2 (707 aa).

Residue Ser-33 is modified to Phosphoserine. The RFX-type winged-helix DNA-binding region spans 204–279 (HLQWLLDNYE…YHYYGIRLKP (76 aa)). Residues 297-337 (QQPVHQKPRYRPAQKTDSLGESGSHSSLHSTPEQAMAAQSQ) are disordered. A compositionally biased stretch (low complexity) spans 315–337 (LGESGSHSSLHSTPEQAMAAQSQ). Ser-420 carries the phosphoserine modification.

It belongs to the RFX family. As to quaternary structure, homodimer; probably only forms homodimers in testis. Heterodimer; heterodimerizes with RFX1 and RFX3.

The protein localises to the nucleus. It is found in the cytoplasm. In terms of biological role, transcription factor that acts as a key regulator of spermatogenesis. Acts by regulating expression of genes required for the haploid phase during spermiogenesis, such as genes required for cilium assembly and function. Recognizes and binds the X-box, a regulatory motif with DNA sequence 5'-GTNRCC(0-3N)RGYAAC-3' present on promoters. Probably activates transcription of the testis-specific histone gene H1-6. This Bos taurus (Bovine) protein is DNA-binding protein RFX2 (RFX2).